Consider the following 434-residue polypeptide: T-box transcription factor T homolog (434 aa).

Positions 50–220 form a DNA-binding region, T-box; sequence LWKKFHKLTN…YNPFAKAFLD (171 aa). Polar residues-rich tracts occupy residues 355 to 364 and 376 to 385; these read SGFSHVSSPQ and HPTSSHQHNL. The tract at residues 355 to 385 is disordered; that stretch reads SGFSHVSSPQSPLPTGLFRNPHPTSSHQHNL.

In the developing embryo, expressed in the mesenchyme founder cells, vegetal plate of the mesenchyme blastula, extending tip of the invaginating archenteron and, later, in the secondary mesenchyme cells.

The protein localises to the nucleus. In terms of biological role, involved in the transcriptional regulation of genes required for mesoderm differentiation. This is T-box transcription factor T homolog from Hemicentrotus pulcherrimus (Sea urchin).